Consider the following 66-residue polypeptide: Conotoxin Cal6.38 (66 aa).

The signal sequence occupies residues 1–22 (MKLTFVLIVAVLVLAVCNFTVA). Disulfide bonds link C38–C55, C45–C59, and C54–C64.

Belongs to the conotoxin O1 superfamily. Expressed by the venom duct.

The protein resides in the secreted. In terms of biological role, probable neurotoxin. The chain is Conotoxin Cal6.38 from Californiconus californicus (California cone).